Reading from the N-terminus, the 298-residue chain is Replication protein A 32 kDa subunit B (298 aa).

The segment at residues 89–163 is a DNA-binding region (OB); sequence VRLVGRMLNK…QVVAYSVRRI (75 aa).

The protein belongs to the replication factor A protein 2 family. Heterotrimer of RPA1, RPA2 and RPA3 (canonical replication protein A complex). Interacts with RPA1A and RPA3. Phosphorylated in a cell-cycle-dependent manner (from the S phase until mitosis). In response to DNA damage, recruited to DNA-repair nuclear foci, as a hypophosphorylated form.

The protein resides in the nucleus. Functionally, component of the replication protein A complex (RPA) required for DNA recombination, repair and replication. The activity of RPA is mediated by single-stranded DNA binding and protein interactions. This chain is Replication protein A 32 kDa subunit B (RPA2B), found in Oryza sativa subsp. japonica (Rice).